A 195-amino-acid polypeptide reads, in one-letter code: Pyruvoyl-dependent arginine decarboxylase AaxB (195 aa).

Pyruvic acid (Ser) is present on S53.

This sequence belongs to the pyruvoyl-dependent arginine decarboxylase family. As to quaternary structure, trimer of an alpha-beta dimer. Pyruvate serves as cofactor.

The protein localises to the cytoplasm. It carries out the reaction L-arginine + H(+) = agmatine + CO2. Its function is as follows. Part of the AaxABC system, catalyzes the decarboxylation of L-arginine. The arginine uptake by the bacterium in the macrophage may be a virulence factor against the host innate immune response. This Chlamydia trachomatis serovar D (strain ATCC VR-885 / DSM 19411 / UW-3/Cx) protein is Pyruvoyl-dependent arginine decarboxylase AaxB (aaxB).